Reading from the N-terminus, the 133-residue chain is Ribosome-binding factor A (133 aa).

It belongs to the RbfA family. In terms of assembly, monomer. Binds 30S ribosomal subunits, but not 50S ribosomal subunits or 70S ribosomes.

It localises to the cytoplasm. Functionally, one of several proteins that assist in the late maturation steps of the functional core of the 30S ribosomal subunit. Associates with free 30S ribosomal subunits (but not with 30S subunits that are part of 70S ribosomes or polysomes). Required for efficient processing of 16S rRNA. May interact with the 5'-terminal helix region of 16S rRNA. This chain is Ribosome-binding factor A, found in Cronobacter sakazakii (strain ATCC BAA-894) (Enterobacter sakazakii).